We begin with the raw amino-acid sequence, 525 residues long: ATP-dependent RNA helicase dbp8 (525 aa).

The span at 1-29 (MAPLSTPESISREISVSSDASADESTSLD) shows a compositional bias: polar residues. A disordered region spans residues 1-76 (MAPLSTPESI…TNATSSRKDD (76 aa)). A Q motif motif is present at residues 95–123 (NSFKALNVAPWLVGSLTTMAVRKPTAIQR). The Helicase ATP-binding domain occupies 126–305 (IPEILKGRDC…SMPQTPGKPP (180 aa)). Residue 139-146 (SRTGSGKT) participates in ATP binding. A DEAD box motif is present at residues 248–251 (DEAD). Residues 337–484 (AFLHVLLSTE…EYEEEGVNLE (148 aa)) enclose the Helicase C-terminal domain.

Belongs to the DEAD box helicase family. DDX49/DBP8 subfamily.

The protein resides in the nucleus. It localises to the nucleolus. The catalysed reaction is ATP + H2O = ADP + phosphate + H(+). ATP-binding RNA helicase involved in 40S ribosomal subunit biogenesis and is required for the normal formation of 18S rRNAs through pre-rRNA processing at A0, A1 and A2 sites. Required for vegetative growth. The protein is ATP-dependent RNA helicase dbp8 (dbp8) of Emericella nidulans (strain FGSC A4 / ATCC 38163 / CBS 112.46 / NRRL 194 / M139) (Aspergillus nidulans).